A 76-amino-acid polypeptide reads, in one-letter code: EIPQNLGSGIPHDRIKLPNGQWCKTPGDLCSSSSECCKAKHSNSVTYASFCSREWSGQQGLFINQCRTCNVESSMC.

4 cysteine pairs are disulfide-bonded: Cys23–Cys37, Cys30–Cys51, Cys36–Cys66, and Cys69–Cys76.

It belongs to the neurotoxin 21 family. Expressed by the venom gland.

The protein resides in the secreted. In terms of biological role, neurotoxin with probable ion channel impairing activity. Is both paralytic and lethal, when injected into lepidopteran larvae. The protein is U1-cyrtautoxin-As1b of Apomastus schlingeri (Trap-door spider).